A 258-amino-acid chain; its full sequence is Indole-3-glycerol phosphate synthase (258 aa).

The protein belongs to the TrpC family.

The enzyme catalyses 1-(2-carboxyphenylamino)-1-deoxy-D-ribulose 5-phosphate + H(+) = (1S,2R)-1-C-(indol-3-yl)glycerol 3-phosphate + CO2 + H2O. The protein operates within amino-acid biosynthesis; L-tryptophan biosynthesis; L-tryptophan from chorismate: step 4/5. This chain is Indole-3-glycerol phosphate synthase, found in Campylobacter jejuni subsp. jejuni serotype O:23/36 (strain 81-176).